The sequence spans 536 residues: CTP synthase (536 aa).

The segment at 1-267 (MSKFVFVTGG…CKETLRCLDL (267 aa)) is amidoligase domain. Serine 13 lines the CTP pocket. Serine 13 provides a ligand contact to UTP. Residues 14-19 (SIGKGI) and aspartate 71 each bind ATP. The Mg(2+) site is built by aspartate 71 and glutamate 141. Residues 148–150 (DIE), 188–193 (KTKPTQ), and lysine 224 each bind CTP. UTP contacts are provided by residues 188–193 (KTKPTQ) and lysine 224. Positions 292 to 534 (KVALVGKYIE…IKASREKLEQ (243 aa)) constitute a Glutamine amidotransferase type-1 domain. Glycine 354 contacts L-glutamine. The active-site Nucleophile; for glutamine hydrolysis is cysteine 381. Residues 382–385 (LGMQ), glutamate 405, and arginine 462 each bind L-glutamine. Catalysis depends on residues histidine 507 and glutamate 509.

The protein belongs to the CTP synthase family. Homotetramer.

It catalyses the reaction UTP + L-glutamine + ATP + H2O = CTP + L-glutamate + ADP + phosphate + 2 H(+). The enzyme catalyses L-glutamine + H2O = L-glutamate + NH4(+). The catalysed reaction is UTP + NH4(+) + ATP = CTP + ADP + phosphate + 2 H(+). Its pathway is pyrimidine metabolism; CTP biosynthesis via de novo pathway; CTP from UDP: step 2/2. With respect to regulation, allosterically activated by GTP, when glutamine is the substrate; GTP has no effect on the reaction when ammonia is the substrate. The allosteric effector GTP functions by stabilizing the protein conformation that binds the tetrahedral intermediate(s) formed during glutamine hydrolysis. Inhibited by the product CTP, via allosteric rather than competitive inhibition. In terms of biological role, catalyzes the ATP-dependent amination of UTP to CTP with either L-glutamine or ammonia as the source of nitrogen. Regulates intracellular CTP levels through interactions with the four ribonucleotide triphosphates. The chain is CTP synthase from Prochlorococcus marinus (strain MIT 9515).